A 210-amino-acid polypeptide reads, in one-letter code: MGQKVNPIGFRLGVIKTWDSKWYAEKDYAKLLHEDLKLRSFLKKRLYHSGVSKIEIERAAGKAKINIFTARPGLIIGKKGSEVETLKKELAKLTDKEVYLNIQEVRKPELDAQLVAENIALQLERRVAFRRAMKKSVTSSLKFGAKGIRITCSGRLGGAEMSRTEWYREGRVPLHTLRADIDYGFAEAKTTYGIIGVKVLLFKGEVLSGK.

Residues L38 to R106 form the KH type-2 domain.

The protein belongs to the universal ribosomal protein uS3 family. Part of the 30S ribosomal subunit. Forms a tight complex with proteins S10 and S14.

Binds the lower part of the 30S subunit head. Binds mRNA in the 70S ribosome, positioning it for translation. This Geotalea uraniireducens (strain Rf4) (Geobacter uraniireducens) protein is Small ribosomal subunit protein uS3.